A 426-amino-acid chain; its full sequence is Dihydroorotase (426 aa).

Zn(2+)-binding residues include His58 and His60. Substrate is bound by residues 60–62 (HLR) and Asn92. 3 residues coordinate Zn(2+): Asp150, His177, and His230. Position 276 (Asn276) interacts with substrate. Asp303 is a Zn(2+) binding site. The active site involves Asp303. Substrate-binding positions include His307 and 321-322 (FG).

This sequence belongs to the metallo-dependent hydrolases superfamily. DHOase family. Class I DHOase subfamily. Zn(2+) serves as cofactor.

It catalyses the reaction (S)-dihydroorotate + H2O = N-carbamoyl-L-aspartate + H(+). It functions in the pathway pyrimidine metabolism; UMP biosynthesis via de novo pathway; (S)-dihydroorotate from bicarbonate: step 3/3. Functionally, catalyzes the reversible cyclization of carbamoyl aspartate to dihydroorotate. This Listeria monocytogenes serotype 4b (strain CLIP80459) protein is Dihydroorotase.